Reading from the N-terminus, the 195-residue chain is uncharacterized protein (195 aa).

The helical transmembrane segment at 175 to 195 threads the bilayer; the sequence is ILGKISGFFGSIVSTIFSLFG.

The protein localises to the membrane. This is an uncharacterized protein from Methanocaldococcus jannaschii (strain ATCC 43067 / DSM 2661 / JAL-1 / JCM 10045 / NBRC 100440) (Methanococcus jannaschii).